A 577-amino-acid chain; its full sequence is Arginine--tRNA ligase (577 aa).

Positions 122–132 match the 'HIGH' region motif; the sequence is PNVAKEMHVGH.

This sequence belongs to the class-I aminoacyl-tRNA synthetase family. Monomer.

It is found in the cytoplasm. The catalysed reaction is tRNA(Arg) + L-arginine + ATP = L-arginyl-tRNA(Arg) + AMP + diphosphate. This is Arginine--tRNA ligase from Salmonella schwarzengrund (strain CVM19633).